Reading from the N-terminus, the 234-residue chain is Orotidine 5'-phosphate decarboxylase (234 aa).

Residues aspartate 10, lysine 31, 58 to 67 (DLKLHDIPNT), threonine 121, arginine 183, glutamine 192, glycine 212, and arginine 213 contribute to the substrate site. The active-site Proton donor is lysine 60.

Belongs to the OMP decarboxylase family. Type 1 subfamily. In terms of assembly, homodimer.

It catalyses the reaction orotidine 5'-phosphate + H(+) = UMP + CO2. The protein operates within pyrimidine metabolism; UMP biosynthesis via de novo pathway; UMP from orotate: step 2/2. Catalyzes the decarboxylation of orotidine 5'-monophosphate (OMP) to uridine 5'-monophosphate (UMP). The sequence is that of Orotidine 5'-phosphate decarboxylase from Lysinibacillus sphaericus (strain C3-41).